Consider the following 170-residue polypeptide: Large ribosomal subunit protein uL10 (170 aa).

This sequence belongs to the universal ribosomal protein uL10 family. In terms of assembly, part of the ribosomal stalk of the 50S ribosomal subunit. The N-terminus interacts with L11 and the large rRNA to form the base of the stalk. The C-terminus forms an elongated spine to which L12 dimers bind in a sequential fashion forming a multimeric L10(L12)X complex.

In terms of biological role, forms part of the ribosomal stalk, playing a central role in the interaction of the ribosome with GTP-bound translation factors. In Chlamydia pneumoniae (Chlamydophila pneumoniae), this protein is Large ribosomal subunit protein uL10 (rplJ).